A 377-amino-acid chain; its full sequence is Alkane 1-monooxygenase 2 (377 aa).

A run of 4 helical transmembrane segments spans residues G17–G37, A43–V63, V87–L107, and V116–V136. The Fe cation site is built by H138, H142, H168, H172, and H173. The helical transmembrane segment at A236–G256 threads the bilayer. Positions 312, 315, and 316 each coordinate Fe cation.

The protein belongs to the fatty acid desaturase type 1 family. AlkB subfamily. Fe(3+) serves as cofactor.

Its subcellular location is the cell inner membrane. It catalyses the reaction octane + 2 reduced [rubredoxin] + O2 + 2 H(+) = 2 oxidized [rubredoxin] + octan-1-ol + H2O. It participates in hydrocarbon metabolism; alkane degradation. In terms of biological role, catalyzes the hydroxylation of n-alkanes in the presence of a NADH-rubredoxin reductase and rubredoxin. It preferably hydroxylases C12-C20 hydrocarbons. The chain is Alkane 1-monooxygenase 2 (alkB2) from Pseudomonas aeruginosa (strain ATCC 15692 / DSM 22644 / CIP 104116 / JCM 14847 / LMG 12228 / 1C / PRS 101 / PAO1).